The chain runs to 565 residues: Ubiquitin carboxyl-terminal hydrolase 21 (565 aa).

Residues 1–14 (MPQASEHRLGRTRE) are compositionally biased toward basic and acidic residues. The tract at residues 1–103 (MPQASEHRLG…PPPTVALPLP (103 aa)) is disordered. Residues 48–57 (MLRPLPPRPG) are compositionally biased toward pro residues. A compositionally biased stretch (basic and acidic residues) spans 58-70 (LPDERLKKLELGR). Residues 134 to 152 (ELGAALSRLALRPEPPTLR) carry the Nuclear export signal motif. Positions 212–558 (VGLRNLGNTC…EGYVLFYQLM (347 aa)) constitute a USP domain. Cys-221 functions as the Nucleophile in the catalytic mechanism. The Zn(2+) site is built by Cys-384, Cys-387, Cys-437, and Cys-440. The active-site Proton acceptor is the His-518.

It belongs to the peptidase C19 family. USP21 subfamily. Interacts with BEND3. Highly expressed in heart, pancreas and skeletal muscle. Also expressed in brain, placenta, liver and kidney, and at very low level in lung.

The protein resides in the cytoplasm. Its subcellular location is the nucleus. The enzyme catalyses Thiol-dependent hydrolysis of ester, thioester, amide, peptide and isopeptide bonds formed by the C-terminal Gly of ubiquitin (a 76-residue protein attached to proteins as an intracellular targeting signal).. Its function is as follows. Deubiquitinates histone H2A, a specific tag for epigenetic transcriptional repression, thereby acting as a coactivator. Deubiquitination of histone H2A releaves the repression of di- and trimethylation of histone H3 at 'Lys-4', resulting in regulation of transcriptional initiation. Regulates gene expression via histone H2A deubiquitination. Deubiquitinates BAZ2A/TIP5 leading to its stabilization. Also capable of removing NEDD8 from NEDD8 conjugates but has no effect on Sentrin-1 conjugates. Also acts as a negative regulator of the ribosome quality control (RQC) by mediating deubiquitination of 40S ribosomal proteins RPS10/eS10 and RPS20/uS10, thereby antagonizing ZNF598-mediated 40S ubiquitination. In Homo sapiens (Human), this protein is Ubiquitin carboxyl-terminal hydrolase 21.